We begin with the raw amino-acid sequence, 120 residues long: UPF0231 protein NT01EI_0766 (120 aa).

It belongs to the UPF0231 family.

The protein is UPF0231 protein NT01EI_0766 of Edwardsiella ictaluri (strain 93-146).